A 473-amino-acid chain; its full sequence is tRNA modification GTPase MnmE (473 aa).

3 residues coordinate (6S)-5-formyl-5,6,7,8-tetrahydrofolate: arginine 30, glutamate 95, and arginine 134. The region spanning 230 to 394 (GVAAVIAGRP…LKSTMAGMVE (165 aa)) is the TrmE-type G domain. Residues 240-245 (NAGKST), 259-265 (SHMPGTT), and 284-287 (DTAG) contribute to the GTP site. Mg(2+)-binding residues include serine 244 and threonine 265. Lysine 473 lines the (6S)-5-formyl-5,6,7,8-tetrahydrofolate pocket.

Belongs to the TRAFAC class TrmE-Era-EngA-EngB-Septin-like GTPase superfamily. TrmE GTPase family. In terms of assembly, homodimer. Heterotetramer of two MnmE and two MnmG subunits. K(+) serves as cofactor.

Its subcellular location is the cytoplasm. Functionally, exhibits a very high intrinsic GTPase hydrolysis rate. Involved in the addition of a carboxymethylaminomethyl (cmnm) group at the wobble position (U34) of certain tRNAs, forming tRNA-cmnm(5)s(2)U34. This Chlorobium phaeovibrioides (strain DSM 265 / 1930) (Prosthecochloris vibrioformis (strain DSM 265)) protein is tRNA modification GTPase MnmE.